Consider the following 163-residue polypeptide: Nucleotide-binding protein CGSHiGG_08790 (163 aa).

This sequence belongs to the YajQ family.

Nucleotide-binding protein. The sequence is that of Nucleotide-binding protein CGSHiGG_08790 from Haemophilus influenzae (strain PittGG).